The primary structure comprises 374 residues: Pectate lyase 3 (374 aa).

Residues 1 to 22 (MKYLLPSTAAGLLLLAAQPTMA) form the signal peptide. An intrachain disulfide couples Cys93 to Cys176. Ca(2+) is bound by residues Asp150, Asp152, Glu187, and Asp191. The active site involves Arg239. The cysteines at positions 350 and 373 are disulfide-linked.

Belongs to the polysaccharide lyase 1 family. PLADES subfamily. It depends on Ca(2+) as a cofactor.

The protein resides in the secreted. The enzyme catalyses Eliminative cleavage of (1-&gt;4)-alpha-D-galacturonan to give oligosaccharides with 4-deoxy-alpha-D-galact-4-enuronosyl groups at their non-reducing ends.. It participates in glycan metabolism; pectin degradation; 2-dehydro-3-deoxy-D-gluconate from pectin: step 2/5. Its function is as follows. Involved in maceration and soft-rotting of plant tissue. The chain is Pectate lyase 3 (pel3) from Pectobacterium atrosepticum (strain SCRI 1043 / ATCC BAA-672) (Erwinia carotovora subsp. atroseptica).